Reading from the N-terminus, the 332-residue chain is L-lactate dehydrogenase A chain (332 aa).

N-acetylalanine is present on A2. K5 carries the post-translational modification N6-acetyllysine; alternate. K5 carries the N6-succinyllysine; alternate modification. At K14 the chain carries N6-acetyllysine. Position 18 is a phosphothreonine (T18). 29–57 provides a ligand contact to NAD(+); the sequence is GAVGMACAISILMKDLADELALVDVIEDK. K57 is modified (N6-acetyllysine; alternate). A Glycyl lysine isopeptide (Lys-Gly) (interchain with G-Cter in SUMO2); alternate cross-link involves residue K57. K81 is modified (N6-acetyllysine). Position 99 (R99) interacts with NAD(+). Residue R106 coordinates substrate. The residue at position 118 (K118) is an N6-acetyllysine; alternate. Position 118 is an N6-succinyllysine; alternate (K118). Position 126 is an N6-acetyllysine (K126). N138 contributes to the NAD(+) binding site. Substrate contacts are provided by N138 and R169. H193 serves as the catalytic Proton acceptor. Residues K224 and K232 each carry the N6-acetyllysine modification. Position 239 is a phosphotyrosine (Y239). The residue at position 243 (K243) is an N6-acetyllysine. T248 is a binding site for substrate. T309 is modified (phosphothreonine). K318 carries the N6-acetyllysine; alternate modification. K318 is modified (N6-succinyllysine; alternate). A Phosphothreonine modification is found at T322.

Belongs to the LDH/MDH superfamily. LDH family. Homotetramer. Interacts with PTEN upstream reading frame protein MP31. ISGylated.

The protein resides in the cytoplasm. The enzyme catalyses (S)-lactate + NAD(+) = pyruvate + NADH + H(+). Its pathway is fermentation; pyruvate fermentation to lactate; (S)-lactate from pyruvate: step 1/1. Interconverts simultaneously and stereospecifically pyruvate and lactate with concomitant interconversion of NADH and NAD(+). The chain is L-lactate dehydrogenase A chain (LDHA) from Macaca fascicularis (Crab-eating macaque).